A 687-amino-acid polypeptide reads, in one-letter code: Glycine--tRNA ligase beta subunit (687 aa).

This sequence belongs to the class-II aminoacyl-tRNA synthetase family. Tetramer of two alpha and two beta subunits.

Its subcellular location is the cytoplasm. It carries out the reaction tRNA(Gly) + glycine + ATP = glycyl-tRNA(Gly) + AMP + diphosphate. The polypeptide is Glycine--tRNA ligase beta subunit (Lactobacillus acidophilus (strain ATCC 700396 / NCK56 / N2 / NCFM)).